The following is a 55-amino-acid chain: Large ribosomal subunit protein bL32c (55 aa).

It belongs to the bacterial ribosomal protein bL32 family.

The protein localises to the plastid. The protein resides in the chloroplast. The sequence is that of Large ribosomal subunit protein bL32c from Nicotiana sylvestris (Wood tobacco).